The sequence spans 326 residues: Transcription factor MYB16 (326 aa).

HTH myb-type domains follow at residues 9–61 (KLGL…TNYL) and 62–116 (RPDI…KKRL). DNA-binding regions (H-T-H motif) lie at residues 37-61 (WRSLPEKAGLHRCGKSCRLRWTNYL) and 89-112 (WSAIATHLPKRTDNEIKNYWNTHL). Disordered stretches follow at residues 197–217 (NWTTKPHEDQQQLESPTSTVS) and 280–299 (DRSFSGDKNETAGESSGGDC). The span at 208-217 (QLESPTSTVS) shows a compositional bias: polar residues. Positions 280–290 (DRSFSGDKNET) are enriched in basic and acidic residues.

As to expression, expressed in trichomes, epidermis and mesophyll cells of young leaves, stems, petals, sepals, carpels and stamens.

It is found in the nucleus. Its function is as follows. Involved in the control of epidermal cell morphogenesis in petals. Promotes unidirectional cell expansion once outgrowth has been initiated. Coordinately with WIN1/SHN1, participates in the regulation of cuticle biosynthesis and wax accumulation in reproductive organs and trichomes. Functions in cuticle nanoridge formation in petals and stamens, and in morphogenesis of petal conical cells and trichomes. Functions as a major regulator of cuticle formation in vegetative organs by regulating the cuticle biosynthesis genes CYP86A8/LCR and CER1. In Arabidopsis thaliana (Mouse-ear cress), this protein is Transcription factor MYB16.